Reading from the N-terminus, the 198-residue chain is Na(+)-translocating NADH-quinone reductase subunit E (198 aa).

Transmembrane regions (helical) follow at residues 11–31, 35–55, 77–97, 109–129, 140–160, and 176–196; these read AVFV…FLAV, VSTA…SVPA, FLNF…LEMI, LGIF…VSFM, IVYG…LAGI, and LGIT…FSGV.

Belongs to the NqrDE/RnfAE family. As to quaternary structure, composed of six subunits; NqrA, NqrB, NqrC, NqrD, NqrE and NqrF.

It is found in the cell inner membrane. It carries out the reaction a ubiquinone + n Na(+)(in) + NADH + H(+) = a ubiquinol + n Na(+)(out) + NAD(+). NQR complex catalyzes the reduction of ubiquinone-1 to ubiquinol by two successive reactions, coupled with the transport of Na(+) ions from the cytoplasm to the periplasm. NqrA to NqrE are probably involved in the second step, the conversion of ubisemiquinone to ubiquinol. The protein is Na(+)-translocating NADH-quinone reductase subunit E of Yersinia enterocolitica serotype O:8 / biotype 1B (strain NCTC 13174 / 8081).